Consider the following 453-residue polypeptide: F-box protein At4g27050 (453 aa).

The F-box domain occupies T3 to T51.

In terms of assembly, part of a SCF (ASK-cullin-F-box) protein ligase complex.

It functions in the pathway protein modification; protein ubiquitination. Component of SCF(ASK-cullin-F-box) E3 ubiquitin ligase complexes, which may mediate the ubiquitination and subsequent proteasomal degradation of target proteins. This is F-box protein At4g27050 from Arabidopsis thaliana (Mouse-ear cress).